We begin with the raw amino-acid sequence, 503 residues long: Alpha-1,3/1,6-mannosyltransferase ALG2 (503 aa).

Helical transmembrane passes span 64-84 and 112-132; these read VYGD…FATI and TCIP…CHFP. Residues N170, N303, N371, and N400 are each glycosylated (N-linked (GlcNAc...) asparagine). Residues 443 to 463 form a helical membrane-spanning segment; that stretch reads WEIFGISFSNFILHMAFIKIL.

The protein belongs to the glycosyltransferase group 1 family. Glycosyltransferase 4 subfamily. In terms of assembly, interacts with ALG1.

The protein resides in the endoplasmic reticulum membrane. It catalyses the reaction a beta-D-Man-(1-&gt;4)-beta-D-GlcNAc-(1-&gt;4)-alpha-D-GlcNAc-diphospho-di-trans,poly-cis-dolichol + GDP-alpha-D-mannose = an alpha-D-Man-(1-&gt;3)-beta-D-Man-(1-&gt;4)-beta-D-GlcNAc-(1-&gt;4)-alpha-D-GlcNAc-diphospho-di-trans,poly-cis-dolichol + GDP + H(+). The catalysed reaction is an alpha-D-Man-(1-&gt;3)-beta-D-Man-(1-&gt;4)-beta-D-GlcNAc-(1-&gt;4)-alpha-D-GlcNAc-diphospho-di-trans,poly-cis-dolichol + GDP-alpha-D-mannose = an alpha-D-Man-(1-&gt;3)-[alpha-D-Man-(1-&gt;6)]-beta-D-Man-(1-&gt;4)-beta-D-GlcNAc-(1-&gt;4)-alpha-D-GlcNAc-diphospho-di-trans,poly-cis-dolichol + GDP + H(+). It participates in protein modification; protein glycosylation. Its function is as follows. Mannosylates Man(2)GlcNAc(2)-dolichol diphosphate and Man(1)GlcNAc(2)-dolichol diphosphate to form Man(3)GlcNAc(2)-dolichol diphosphate. The protein is Alpha-1,3/1,6-mannosyltransferase ALG2 (ALG2) of Saccharomyces cerevisiae (strain ATCC 204508 / S288c) (Baker's yeast).